Reading from the N-terminus, the 208-residue chain is Large ribosomal subunit protein bL25 (208 aa).

It belongs to the bacterial ribosomal protein bL25 family. CTC subfamily. Part of the 50S ribosomal subunit; part of the 5S rRNA/L5/L18/L25 subcomplex. Contacts the 5S rRNA. Binds to the 5S rRNA independently of L5 and L18.

Its function is as follows. This is one of the proteins that binds to the 5S RNA in the ribosome where it forms part of the central protuberance. This Burkholderia pseudomallei (strain K96243) protein is Large ribosomal subunit protein bL25.